The following is a 161-amino-acid chain: Hydrogenase expression/formation protein HoxO (161 aa).

It belongs to the HupG/HyaE family.

The polypeptide is Hydrogenase expression/formation protein HoxO (hoxO) (Cupriavidus necator (strain ATCC 17699 / DSM 428 / KCTC 22496 / NCIMB 10442 / H16 / Stanier 337) (Ralstonia eutropha)).